A 284-amino-acid chain; its full sequence is Proteasome subunit beta (284 aa).

Residues Met-1–Gly-56 constitute a propeptide, removed in mature form; by autocatalysis. The active-site Nucleophile is the Thr-57.

Belongs to the peptidase T1B family. As to quaternary structure, the 20S proteasome core is composed of 14 alpha and 14 beta subunits that assemble into four stacked heptameric rings, resulting in a barrel-shaped structure. The two inner rings, each composed of seven catalytic beta subunits, are sandwiched by two outer rings, each composed of seven alpha subunits. The catalytic chamber with the active sites is on the inside of the barrel. Has a gated structure, the ends of the cylinder being occluded by the N-termini of the alpha-subunits. Is capped by the proteasome-associated ATPase, ARC.

Its subcellular location is the cytoplasm. It catalyses the reaction Cleavage of peptide bonds with very broad specificity.. The protein operates within protein degradation; proteasomal Pup-dependent pathway. Its activity is regulated as follows. The formation of the proteasomal ATPase ARC-20S proteasome complex, likely via the docking of the C-termini of ARC into the intersubunit pockets in the alpha-rings, may trigger opening of the gate for substrate entry. Interconversion between the open-gate and close-gate conformations leads to a dynamic regulation of the 20S proteasome proteolysis activity. Component of the proteasome core, a large protease complex with broad specificity involved in protein degradation. In Saccharopolyspora erythraea (strain ATCC 11635 / DSM 40517 / JCM 4748 / NBRC 13426 / NCIMB 8594 / NRRL 2338), this protein is Proteasome subunit beta.